The chain runs to 112 residues: Putative UPF0320 protein YEL074W (112 aa).

The disordered stretch occupies residues 93-112 (EKSPSKSPKHKNILPFNFTK).

The protein belongs to the UPF0320 family.

This Saccharomyces cerevisiae (strain ATCC 204508 / S288c) (Baker's yeast) protein is Putative UPF0320 protein YEL074W.